A 156-amino-acid polypeptide reads, in one-letter code: Ribosomal RNA large subunit methyltransferase H (156 aa).

Residues L73, G104, and 123-128 each bind S-adenosyl-L-methionine; that span reads LSKLTL.

It belongs to the RNA methyltransferase RlmH family. In terms of assembly, homodimer.

Its subcellular location is the cytoplasm. It catalyses the reaction pseudouridine(1915) in 23S rRNA + S-adenosyl-L-methionine = N(3)-methylpseudouridine(1915) in 23S rRNA + S-adenosyl-L-homocysteine + H(+). In terms of biological role, specifically methylates the pseudouridine at position 1915 (m3Psi1915) in 23S rRNA. The chain is Ribosomal RNA large subunit methyltransferase H from Idiomarina loihiensis (strain ATCC BAA-735 / DSM 15497 / L2-TR).